A 175-amino-acid polypeptide reads, in one-letter code: Ribulose bisphosphate carboxylase small subunit, chloroplastic (175 aa).

Residues 1-46 constitute a chloroplast transit peptide; it reads MAPSVMASSATTVAPFQGLKSTAGMPVARRSGNSSFGNVSNGGRIR. The interaction with large subunit stretch occupies residues 60 to 64; that stretch reads ETLSY.

Belongs to the RuBisCO small chain family. As to quaternary structure, heterohexadecamer of 8 large and 8 small subunits.

The protein localises to the plastid. Its subcellular location is the chloroplast. Its function is as follows. RuBisCO catalyzes two reactions: the carboxylation of D-ribulose 1,5-bisphosphate, the primary event in carbon dioxide fixation, as well as the oxidative fragmentation of the pentose substrate. Both reactions occur simultaneously and in competition at the same active site. Although the small subunit is not catalytic it is essential for maximal activity. This chain is Ribulose bisphosphate carboxylase small subunit, chloroplastic, found in Oryza sativa subsp. indica (Rice).